The sequence spans 272 residues: MEYIKKIALYMSVLLLIIFIGGCGNMKDEQKKEEQTNKTDSKEEQIKKSFAKTLDMYPIKNLEDLYDKEGYRDGEFEKGDKGMWVLYSSIVSEFKGESLKSRGMILKLDRNKRTAKGSYIIRELKEDKNHDVQKNEKKYPVKLVNNKIIPTEDVKNEDLKREIENFKLFSQYGEFKSLNTDRITNISYNPNAPNYSAEYKINDDDNNIKQLKNRFNIKSNKNPKLLFKGAGNIKGSSVGYKEIQIIFNRNKEESVSCIDSIEFKPSEGDYNE.

A signal peptide spans 1–22; that stretch reads MEYIKKIALYMSVLLLIIFIGG. C23 carries N-palmitoyl cysteine lipidation. C23 carries the S-diacylglycerol cysteine lipid modification.

The protein belongs to the staphylococcal tandem lipoprotein family.

The protein resides in the cell membrane. This is an uncharacterized protein from Staphylococcus aureus (strain MRSA252).